Here is a 141-residue protein sequence, read N- to C-terminus: Ubiquitin-like protein ATG12 (141 aa).

Positions 1–53 (MSEDSEVVLQLPSAPVGAGGESLPELSPETATPEPPSSAAVSPGTEEPPGDTK) are disordered. Low complexity predominate over residues 23 to 40 (LPELSPETATPEPPSSAA). Residue glycine 141 forms a Glycyl lysine isopeptide (Gly-Lys) (interchain with K-? in acceptor protein) linkage.

The protein belongs to the ATG12 family. Forms a conjugate with ATG5. Part of the minor complex composed of 4 sets of ATG12-ATG5 and ATG16L1 (400 kDa); this complex interacts with ATG3 leading to disruption of ATG7 interaction and promotion of ATG8-like proteins lipidation. Forms an 800-kDa complex composed of ATG12-ATG5 and ATG16L2. Interacts with DHX58/RIG-1, IFIH1/MDA5 and MAVS/IPS-1 in monomeric form as well as in ATG12-ATG5 conjugate. The interaction with MAVS is further enhanced upon vesicular stomatitis virus (VSV) infection. Interacts with ATG3; this interaction is essential for phosphatidylethanolamine (PE)-conjugated ATG8-like proteins formation. Interacts with ATG7. Interacts with ATG10. The ATG12-ATG5 conjugate interacts with RAB33A; this interaction is bridged by ATG16L1 and promotes ATG12-ATG5-ATG16L1 complex recruitment to phagophores. Interacts with TECPR1. Interacts with SH3BGRL. The ATG12-ATG5 conjugate interacts with PDCD6IP (via the BRO1 domain); this interaction is bridged by ATG12 and promotes multiple PDCD6IP-mediated functions such as endolysosomal trafficking, macroautophagy and exosome biogenesis. Acetylated by EP300. As to expression, ubiquitous.

The protein localises to the cytoplasm. It is found in the preautophagosomal structure membrane. Ubiquitin-like protein involved in autophagy vesicles formation. Conjugation with ATG5 through a ubiquitin-like conjugating system involving also ATG7 as an E1-like activating enzyme and ATG10 as an E2-like conjugating enzyme, is essential for its function. The ATG12-ATG5 conjugate acts as an E3-like enzyme which is required for lipidation of ATG8 family proteins and their association to the vesicle membranes. As part of the ATG8 conjugation system with ATG5 and ATG16L1, required for recruitment of LRRK2 to stressed lysosomes and induction of LRRK2 kinase activity in response to lysosomal stress. In terms of biological role, (Microbial infection) May act as a proviral factor. In association with ATG5, negatively regulates the innate antiviral immune response by impairing the type I IFN production pathway upon vesicular stomatitis virus (VSV) infection. The protein is Ubiquitin-like protein ATG12 of Mus musculus (Mouse).